The sequence spans 356 residues: Holliday junction branch migration complex subunit RuvB (356 aa).

The interval 13–201 is large ATPase domain (RuvB-L); sequence SSNLSRKTRL…FGITQRLNFY (189 aa). Residues 15-35 are disordered; that stretch reads NLSRKTRLLDPTPSLEEGKVR. ATP contacts are provided by residues Leu-40, Arg-41, Gly-82, Lys-85, Thr-86, Thr-87, 148–150, Arg-191, Tyr-201, and Arg-238; that span reads EDF. Thr-86 contributes to the Mg(2+) binding site. Residues 202–273 form a small ATPAse domain (RuvB-S) region; the sequence is SISDLNRIIQ…LVDKSLTLHQ (72 aa). The tract at residues 276–356 is head domain (RuvB-H); it reads ECGLDQSDRR…NSCKNSPIIK (81 aa). Positions 331 and 336 each coordinate DNA.

The protein belongs to the RuvB family. As to quaternary structure, homohexamer. Forms an RuvA(8)-RuvB(12)-Holliday junction (HJ) complex. HJ DNA is sandwiched between 2 RuvA tetramers; dsDNA enters through RuvA and exits via RuvB. An RuvB hexamer assembles on each DNA strand where it exits the tetramer. Each RuvB hexamer is contacted by two RuvA subunits (via domain III) on 2 adjacent RuvB subunits; this complex drives branch migration. In the full resolvosome a probable DNA-RuvA(4)-RuvB(12)-RuvC(2) complex forms which resolves the HJ.

It is found in the cytoplasm. It catalyses the reaction ATP + H2O = ADP + phosphate + H(+). Its function is as follows. The RuvA-RuvB-RuvC complex processes Holliday junction (HJ) DNA during genetic recombination and DNA repair, while the RuvA-RuvB complex plays an important role in the rescue of blocked DNA replication forks via replication fork reversal (RFR). RuvA specifically binds to HJ cruciform DNA, conferring on it an open structure. The RuvB hexamer acts as an ATP-dependent pump, pulling dsDNA into and through the RuvAB complex. RuvB forms 2 homohexamers on either side of HJ DNA bound by 1 or 2 RuvA tetramers; 4 subunits per hexamer contact DNA at a time. Coordinated motions by a converter formed by DNA-disengaged RuvB subunits stimulates ATP hydrolysis and nucleotide exchange. Immobilization of the converter enables RuvB to convert the ATP-contained energy into a lever motion, pulling 2 nucleotides of DNA out of the RuvA tetramer per ATP hydrolyzed, thus driving DNA branch migration. The RuvB motors rotate together with the DNA substrate, which together with the progressing nucleotide cycle form the mechanistic basis for DNA recombination by continuous HJ branch migration. Branch migration allows RuvC to scan DNA until it finds its consensus sequence, where it cleaves and resolves cruciform DNA. The sequence is that of Holliday junction branch migration complex subunit RuvB from Prochlorococcus marinus (strain SARG / CCMP1375 / SS120).